A 448-amino-acid chain; its full sequence is Trigger factor (448 aa).

One can recognise a PPIase FKBP-type domain in the interval 167 to 253 (GSIVRVDFVE…LKDIKRRDIP (87 aa)).

It belongs to the FKBP-type PPIase family. Tig subfamily.

It is found in the cytoplasm. It catalyses the reaction [protein]-peptidylproline (omega=180) = [protein]-peptidylproline (omega=0). Functionally, involved in protein export. Acts as a chaperone by maintaining the newly synthesized protein in an open conformation. Functions as a peptidyl-prolyl cis-trans isomerase. The sequence is that of Trigger factor from Borrelia turicatae (strain 91E135).